The chain runs to 485 residues: NADH-quinone oxidoreductase subunit N (485 aa).

The next 14 helical transmembrane spans lie at 8 to 28, 35 to 55, 71 to 91, 105 to 125, 127 to 147, 159 to 179, 203 to 223, 235 to 255, 271 to 291, 297 to 317, 326 to 346, 373 to 393, 408 to 430, and 455 to 475; these read LIAL…MLSI, FLNA…LWFV, GFAM…CTFA, FYLL…ANHL, ALFL…GYAF, YTIL…LVYA, LLAG…LVPF, PAPV…GVVM, VVLG…ALSQ, LLGY…IALQ, VGVY…VVSL, AAVM…LGFI, WWLV…RVAV, and IVVL…QPLI.

It belongs to the complex I subunit 2 family. As to quaternary structure, NDH-1 is composed of 13 different subunits. Subunits NuoA, H, J, K, L, M, N constitute the membrane sector of the complex.

Its subcellular location is the cell inner membrane. It catalyses the reaction a quinone + NADH + 5 H(+)(in) = a quinol + NAD(+) + 4 H(+)(out). In terms of biological role, NDH-1 shuttles electrons from NADH, via FMN and iron-sulfur (Fe-S) centers, to quinones in the respiratory chain. The immediate electron acceptor for the enzyme in this species is believed to be ubiquinone. Couples the redox reaction to proton translocation (for every two electrons transferred, four hydrogen ions are translocated across the cytoplasmic membrane), and thus conserves the redox energy in a proton gradient. In Salmonella arizonae (strain ATCC BAA-731 / CDC346-86 / RSK2980), this protein is NADH-quinone oxidoreductase subunit N.